A 784-amino-acid chain; its full sequence is uncharacterized protein (784 aa).

One can recognise a 3'-5' exonuclease domain in the interval I422 to V619.

This is an uncharacterized protein from Caenorhabditis elegans.